The primary structure comprises 654 residues: Marinolic acid--CoA ligase (654 aa).

It belongs to the ATP-dependent AMP-binding enzyme family.

It carries out the reaction ATP + a marinolic acid + CoA = AMP + diphosphate + a marinoloyl-CoA.. The enzyme catalyses ATP + a pseudomonic acid + CoA = AMP + diphosphate + a pseudomonoyl-CoA.. The catalysed reaction is marinolate C + ATP + CoA = marinoloyl-CoA C + AMP + diphosphate. It catalyses the reaction pseudomonate C + ATP + CoA = pseudomonoyl-CoA C + AMP + diphosphate. Its pathway is antibiotic biosynthesis. Its function is as follows. Acyl-CoA ligase that catalyzes the CoA acylation of pseudomonate C, leading to the formation of pseudomonoyl-CoA C (PAC-CoA). Also shows high activity with pseudomonoyl-CoA A as substrate. In addition, can activate acetic, octanoic, 2,4-dodecadienoic and 2,4-decadienoic acids, although with much lower activity. In vivo, is probably involved in the biosynthesis of thiomarinol, a naturally occurring double-headed antibiotic. The sequence is that of Marinolic acid--CoA ligase from Pseudoalteromonas sp. (strain SANK 73390).